The chain runs to 386 residues: 2,3-diketo-5-methylthiopentyl-1-phosphate enolase (386 aa).

The active-site Proton acceptor is the Lys-85. Substrate-binding positions include Lys-131, 157 to 160, His-248, Gly-316, and 338 to 339; these read KDDE and GT. Mg(2+) contacts are provided by Lys-157, Asp-159, and Glu-160. At Lys-157 the chain carries N6-carboxylysine.

The protein belongs to the RuBisCO large chain family. Type IV subfamily. As to quaternary structure, homodimer. It depends on Mg(2+) as a cofactor.

The enzyme catalyses 5-methylsulfanyl-2,3-dioxopentyl phosphate = 2-hydroxy-5-methylsulfanyl-3-oxopent-1-enyl phosphate. It functions in the pathway amino-acid biosynthesis; L-methionine biosynthesis via salvage pathway; L-methionine from S-methyl-5-thio-alpha-D-ribose 1-phosphate: step 3/6. Functionally, catalyzes the enolization of 2,3-diketo-5-methylthiopentyl-1-phosphate (DK-MTP-1-P) into 2-hydroxy-3-keto-5-methylthiopentenyl-1-phosphate (HK-MTPenyl-1-P). The polypeptide is 2,3-diketo-5-methylthiopentyl-1-phosphate enolase (Microcystis aeruginosa (strain NIES-843 / IAM M-2473)).